The chain runs to 860 residues: Probable beta-glucosidase A (860 aa).

The first 19 residues, 1 to 19 (MRFTSIEAVALTAVSLASA), serve as a signal peptide directing secretion. Asparagine 61, asparagine 211, and asparagine 252 each carry an N-linked (GlcNAc...) asparagine glycan. Aspartate 280 is an active-site residue. Residues asparagine 315, asparagine 322, asparagine 354, asparagine 387, asparagine 442, asparagine 523, asparagine 542, asparagine 564, asparagine 658, asparagine 690, and asparagine 712 are each glycosylated (N-linked (GlcNAc...) asparagine).

This sequence belongs to the glycosyl hydrolase 3 family.

Its subcellular location is the secreted. The enzyme catalyses Hydrolysis of terminal, non-reducing beta-D-glucosyl residues with release of beta-D-glucose.. It functions in the pathway glycan metabolism; cellulose degradation. Its function is as follows. Beta-glucosidases are one of a number of cellulolytic enzymes involved in the degradation of cellulosic biomass. Catalyzes the last step releasing glucose from the inhibitory cellobiose. The sequence is that of Probable beta-glucosidase A (bglA) from Aspergillus niger (strain ATCC MYA-4892 / CBS 513.88 / FGSC A1513).